The chain runs to 528 residues: Potassium voltage-gated channel subfamily A member 3 (528 aa).

Residues 1-32 (MTVVPGDHLLEPEAAGGGGGDPPQGGCGSGGG) are disordered. At 1–187 (MTVVPGDHLL…EYPESSGPAR (187 aa)) the chain is on the cytoplasmic side. Positions 15-32 (AGGGGGDPPQGGCGSGGG) are enriched in gly residues. The helical transmembrane segment at 188-206 (GIAIVSVLVILISIVIFCL) threads the bilayer. The Extracellular segment spans residues 207–247 (ETLPEFRDEKDYPASPSQDVFEAANNSTSGAPSGASSFSDP). N232 is a glycosylation site (N-linked (GlcNAc...) asparagine). The chain crosses the membrane as a helical span at residues 248–269 (FFVVETLCIIWFSFELLVRFFA). C270 carries the S-palmitoyl cysteine lipid modification. The Cytoplasmic portion of the chain corresponds to 270–280 (CPSKATFSRNI). The helical transmembrane segment at 281–301 (MNLIDIVAIIPYFITLGTELA) threads the bilayer. At 302–315 (ERQGNGQQAMSLAI) the chain is on the extracellular side. Residues 316–334 (LRVIRLVRVFRIFKLSRHS) traverse the membrane as a helical; Voltage-sensor segment. The Cytoplasmic segment spans residues 335 to 350 (KGLQILGQTLKASMRE). Residues 351-370 (LGLLIFFLFIGVILFSSAVY) form a helical membrane-spanning segment. Residues 371-411 (FAEADDPSSGFNSIPDAFWWAVVTMTTVGYGDMHPVTIGGK) are Extracellular-facing. Residues 397–402 (TVGYGD) carry the Selectivity filter motif. Residues 412 to 434 (IVGSLCAIAGVLTIALPVPVIVS) traverse the membrane as a helical segment. The Cytoplasmic portion of the chain corresponds to 435–528 (NFNYFYHRET…VNIKKIFTDV (94 aa)). The segment at 435–528 (NFNYFYHRET…VNIKKIFTDV (94 aa)) is interaction with KCNE4. Position 452 is a phosphotyrosine (Y452). Residue S473 is modified to Phosphoserine; by PKA. The PDZ-binding signature appears at 526-528 (TDV).

This sequence belongs to the potassium channel family. A (Shaker) (TC 1.A.1.2) subfamily. Kv1.3/KCNA3 sub-subfamily. As to quaternary structure, homotetramer. Forms heterooligomers with KCNE4 which inhibits KCNA3 activity by impairing localization to the cell membrane. The stoichiometry of KCNA3 and KCNE4 in the heterooligomers are 4:1, 4:2, 4:3 or 4:4 respectively. Increasing the number of KCNE4 subunits steadily slows the activation KCNA3 and decreases its abundance at the cell membrane. However, a single subunit of KCNE4 is sufficient for the cooperative enhancement of the inactivating function of the channel. Interacts with SEC24D; this interaction is reduced in the presence of KCNE4. Interacts with DLG1, DLG2 and DLG4 via their PDZ domains. Post-translationally, N-glycosylation promotes the cell surface expression. In terms of processing, phosphorylation on Tyr-452 inhibits its channel activity.

The protein localises to the cell membrane. It carries out the reaction K(+)(in) = K(+)(out). With respect to regulation, activity is up-regulated by JAK2. In terms of biological role, mediates the voltage-dependent potassium ion permeability of excitable membranes. Assuming opened or closed conformations in response to the voltage difference across the membrane, the protein forms a potassium-selective channel through which potassium ions may pass in accordance with their electrochemical gradient. In Mus musculus (Mouse), this protein is Potassium voltage-gated channel subfamily A member 3 (Kcna3).